Here is a 277-residue protein sequence, read N- to C-terminus: UPF0276 protein PP_0992 (277 aa).

This sequence belongs to the UPF0276 family.

The sequence is that of UPF0276 protein PP_0992 from Pseudomonas putida (strain ATCC 47054 / DSM 6125 / CFBP 8728 / NCIMB 11950 / KT2440).